A 186-amino-acid polypeptide reads, in one-letter code: uncharacterized protein (186 aa).

2 consecutive CBS domains span residues 10 to 69 (IMKK…KLPP) and 77 to 133 (ISSG…IIST).

This is an uncharacterized protein from Methanocaldococcus jannaschii (strain ATCC 43067 / DSM 2661 / JAL-1 / JCM 10045 / NBRC 100440) (Methanococcus jannaschii).